Here is a 181-residue protein sequence, read N- to C-terminus: Large ribosomal subunit protein uL5c (181 aa).

It belongs to the universal ribosomal protein uL5 family. Part of the 50S ribosomal subunit; contacts the 5S rRNA.

Its subcellular location is the plastid. The protein resides in the cyanelle. Binds 5S rRNA, forms part of the central protuberance of the 50S subunit. This chain is Large ribosomal subunit protein uL5c (rpl5), found in Cyanophora paradoxa.